We begin with the raw amino-acid sequence, 152 residues long: Transcriptional repressor NrdR (152 aa).

Residues 3–34 (CAFCGNPDTQVIDSRVSEDGSSIRRRRRCPAC) fold into a zinc finger. Residues 49–139 (PQVVKTAGHR…VYRSFQDISE (91 aa)) enclose the ATP-cone domain.

It belongs to the NrdR family. It depends on Zn(2+) as a cofactor.

Functionally, negatively regulates transcription of bacterial ribonucleotide reductase nrd genes and operons by binding to NrdR-boxes. In Chromobacterium violaceum (strain ATCC 12472 / DSM 30191 / JCM 1249 / CCUG 213 / NBRC 12614 / NCIMB 9131 / NCTC 9757 / MK), this protein is Transcriptional repressor NrdR.